The chain runs to 120 residues: Large ribosomal subunit protein bL20 (120 aa).

Belongs to the bacterial ribosomal protein bL20 family.

Its function is as follows. Binds directly to 23S ribosomal RNA and is necessary for the in vitro assembly process of the 50S ribosomal subunit. It is not involved in the protein synthesizing functions of that subunit. The chain is Large ribosomal subunit protein bL20 from Cereibacter sphaeroides (strain ATCC 17029 / ATH 2.4.9) (Rhodobacter sphaeroides).